Consider the following 250-residue polypeptide: L-ascorbate peroxidase 1, cytosolic (250 aa).

His-42 serves as the catalytic Proton acceptor. The segment at 113–137 (VPFHPGREDKPAPPPEGRLPDATKG) is disordered. His-163 is a binding site for heme b. Thr-164, Thr-180, Asn-182, and Asp-187 together coordinate K(+).

Belongs to the peroxidase family. Ascorbate peroxidase subfamily. It depends on heme b as a cofactor.

It is found in the cytoplasm. It catalyses the reaction L-ascorbate + H2O2 = L-dehydroascorbate + 2 H2O. Functionally, plays a key role in hydrogen peroxide removal. The polypeptide is L-ascorbate peroxidase 1, cytosolic (APX1) (Oryza sativa subsp. indica (Rice)).